Consider the following 595-residue polypeptide: Solute carrier family 13 member 1 (595 aa).

A run of 5 helical transmembrane segments spans residues 13–33 (FLLV…IRSK), 40–60 (ILFV…ITAL), 77–97 (VASA…CLAT), 113–133 (VMMV…STAF), and 134–154 (LSMW…VEAV). N-linked (GlcNAc...) asparagine glycosylation is present at asparagine 174. Residues 190–218 (QETNERKEKTKPALGSSNDKGKVSSKMET) are disordered. Over residues 208–218 (DKGKVSSKMET) the composition is skewed to basic and acidic residues. 8 consecutive transmembrane segments (helical) span residues 239 to 259 (LMCL…ITGT), 283 to 303 (SWFL…WIWL), 348 to 368 (IVTL…DPGF), 381 to 401 (GYVT…LIPA), 464 to 484 (PLGS…VTSL), 491 to 511 (PATI…IHVN), 512 to 532 (PLHI…LPVA), and 553 to 573 (AGLG…FTWI). The N-linked (GlcNAc...) asparagine glycan is linked to asparagine 591.

Belongs to the SLC13A/DASS transporter (TC 2.A.47) family. NADC subfamily. Kidney and intestine.

It localises to the apical cell membrane. The catalysed reaction is sulfate(out) + 3 Na(+)(out) = sulfate(in) + 3 Na(+)(in). The enzyme catalyses selenate(out) + 3 Na(+)(out) = selenate(in) + 3 Na(+)(in). It catalyses the reaction thiosulfate(out) + 3 Na(+)(out) = thiosulfate(in) + 3 Na(+)(in). Its function is as follows. Sodium:sulfate symporter that mediates sulfate reabsorption in the kidney and small intestine. Can also mediate the transport of selenate and thiosulfate. In Rattus norvegicus (Rat), this protein is Solute carrier family 13 member 1 (Slc13a1).